A 122-amino-acid chain; its full sequence is Large ribosomal subunit protein uL14 (122 aa).

It belongs to the universal ribosomal protein uL14 family. As to quaternary structure, part of the 50S ribosomal subunit. Forms a cluster with proteins L3 and L19. In the 70S ribosome, L14 and L19 interact and together make contacts with the 16S rRNA in bridges B5 and B8.

Its function is as follows. Binds to 23S rRNA. Forms part of two intersubunit bridges in the 70S ribosome. The chain is Large ribosomal subunit protein uL14 from Pediococcus pentosaceus (strain ATCC 25745 / CCUG 21536 / LMG 10740 / 183-1w).